The sequence spans 213 residues: A-type ATP synthase subunit D (213 aa).

Belongs to the V-ATPase D subunit family. In terms of assembly, has multiple subunits with at least A(3), B(3), C, D, E, F, H, I and proteolipid K(x).

The protein localises to the cell membrane. Its function is as follows. Component of the A-type ATP synthase that produces ATP from ADP in the presence of a proton gradient across the membrane. This is A-type ATP synthase subunit D from Thermoplasma acidophilum (strain ATCC 25905 / DSM 1728 / JCM 9062 / NBRC 15155 / AMRC-C165).